The chain runs to 922 residues: DNA gyrase subunit A (922 aa).

The segment covering 1-14 (MTETPTDGGSTPPS) has biased composition (low complexity). A disordered region spans residues 1-24 (MTETPTDGGSTPPSDGGGPGGRIE). The region spanning 49–518 (LPDVRDGLKP…ADGDLSMEDL (470 aa)) is the Topo IIA-type catalytic domain. Catalysis depends on Y137, which acts as the O-(5'-phospho-DNA)-tyrosine intermediate. Positions 545–551 (QRRGGKG) match the GyrA-box motif. The interval 861–922 (EANGDDELDE…TEPDPGESDG (62 aa)) is disordered. 2 stretches are compositionally biased toward acidic residues: residues 863-890 (NGDD…DESA) and 912-922 (DTEPDPGESDG).

Belongs to the type II topoisomerase GyrA/ParC subunit family. As to quaternary structure, heterotetramer, composed of two GyrA and two GyrB chains. In the heterotetramer, GyrA contains the active site tyrosine that forms a transient covalent intermediate with DNA, while GyrB binds cofactors and catalyzes ATP hydrolysis.

The protein localises to the cytoplasm. It carries out the reaction ATP-dependent breakage, passage and rejoining of double-stranded DNA.. In terms of biological role, a type II topoisomerase that negatively supercoils closed circular double-stranded (ds) DNA in an ATP-dependent manner to modulate DNA topology and maintain chromosomes in an underwound state. Negative supercoiling favors strand separation, and DNA replication, transcription, recombination and repair, all of which involve strand separation. Also able to catalyze the interconversion of other topological isomers of dsDNA rings, including catenanes and knotted rings. Type II topoisomerases break and join 2 DNA strands simultaneously in an ATP-dependent manner. This chain is DNA gyrase subunit A, found in Nocardioides sp. (strain ATCC BAA-499 / JS614).